Reading from the N-terminus, the 526-residue chain is Probable rhamnogalacturonase B (526 aa).

Positions methionine 1–alanine 20 are cleaved as a signal peptide. A disulfide bond links cysteine 41 and cysteine 67. Asparagine 144 is a glycosylation site (N-linked (GlcNAc...) asparagine). Aspartate 218 acts as the Proton donor in catalysis. Cysteine 220 and cysteine 237 are oxidised to a cystine. N-linked (GlcNAc...) asparagine glycosylation is found at asparagine 238 and asparagine 253. Residue histidine 293 is part of the active site. An N-linked (GlcNAc...) asparagine glycan is attached at asparagine 320. 2 disulfides stabilise this stretch: cysteine 343/cysteine 349 and cysteine 371/cysteine 380.

The protein belongs to the glycosyl hydrolase 28 family.

The protein localises to the secreted. It catalyses the reaction Endohydrolysis of alpha-D-GalA-(1-&gt;2)-alpha-L-Rha glycosidic bond in the rhamnogalacturonan I backbone with initial inversion of anomeric configuration releasing oligosaccharides with beta-D-GalA at the reducing end.. In terms of biological role, pectinolytic enzymes consist of four classes of enzymes: pectine lyase, polygalacturonase, pectin methylesterase and rhamnogalacturonase. Hydrolyzes alpha-D-galacturonopyranosyl-(1,2)-alpha-L-rhamnopyranosyl linkages in the backbone of the hairy regions of pectins. The sequence is that of Probable rhamnogalacturonase B (rhgB) from Aspergillus terreus (strain NIH 2624 / FGSC A1156).